The sequence spans 383 residues: ERCC4 domain-containing protein EP364R (383 aa).

The ERCC4 domain maps to 3–101; it reads FLVADHREHH…QLYFFVEGPA (99 aa). A disordered region spans residues 336-367; it reads LHKVSDEASENASHDASENASDKVSSPTGHQT. Over residues 347 to 356 the composition is skewed to basic and acidic residues; sequence ASHDASENAS. Residues 357–367 are compositionally biased toward polar residues; the sequence is DKVSSPTGHQT.

This sequence belongs to the asfivirus EP364R family.

Functionally, plays a role in the inhibition of type I interferon signaling pathway. Mechanistically, specifically interacts with 2',3'-cGAMP and cleaves it via its phosphodiesterase activity. In turn, prevents 2',3'-cGAMP interaction with host ER-resident STING1 leading to inhibition of downstream signaling pathway and type I interferon production. The protein is ERCC4 domain-containing protein EP364R of Ornithodoros (relapsing fever ticks).